Here is an 82-residue protein sequence, read N- to C-terminus: Polyferredoxin protein FwdG (82 aa).

4Fe-4S ferredoxin-type domains follow at residues 4 to 33 (YELV…PETW) and 51 to 80 (VVTV…LVFK). 8 residues coordinate [4Fe-4S] cluster: cysteine 13, cysteine 16, cysteine 19, cysteine 23, cysteine 60, cysteine 63, cysteine 66, and cysteine 70.

[4Fe-4S] cluster serves as cofactor.

The sequence is that of Polyferredoxin protein FwdG (fwdG) from Methanocaldococcus jannaschii (strain ATCC 43067 / DSM 2661 / JAL-1 / JCM 10045 / NBRC 100440) (Methanococcus jannaschii).